The following is a 476-amino-acid chain: ATP synthase subunit beta, chloroplastic (476 aa).

156–163 (GGAGVGKT) provides a ligand contact to ATP.

This sequence belongs to the ATPase alpha/beta chains family. As to quaternary structure, F-type ATPases have 2 components, CF(1) - the catalytic core - and CF(0) - the membrane proton channel. CF(1) has five subunits: alpha(3), beta(3), gamma(1), delta(1), epsilon(1). CF(0) has four main subunits: a(1), b(1), b'(1) and c(9-12).

The protein resides in the plastid. It is found in the chloroplast thylakoid membrane. It carries out the reaction ATP + H2O + 4 H(+)(in) = ADP + phosphate + 5 H(+)(out). Functionally, produces ATP from ADP in the presence of a proton gradient across the membrane. The catalytic sites are hosted primarily by the beta subunits. The protein is ATP synthase subunit beta, chloroplastic of Fucus vesiculosus (Bladder wrack).